Reading from the N-terminus, the 384-residue chain is Endoglucanase (384 aa).

Positions 1–25 are cleaved as a signal peptide; that stretch reads MTRRRLLHAGTLAGVAALLPAAALA. The active-site Proton donor is the Glu63. The active-site Nucleophile is Asp124.

The protein belongs to the glycosyl hydrolase 8 (cellulase D) family.

It is found in the secreted. The enzyme catalyses Endohydrolysis of (1-&gt;4)-beta-D-glucosidic linkages in cellulose, lichenin and cereal beta-D-glucans.. It participates in glycan metabolism; bacterial cellulose biosynthesis. Its function is as follows. Hydrolyzes carboxymethylcellulose. The chain is Endoglucanase (bcsZ) from Xanthomonas axonopodis pv. citri (strain 306).